We begin with the raw amino-acid sequence, 185 residues long: MAKSAYEPRLKKEYVERIRKAIQEQFSYANEMQIPRLDKIVINMGVGEATGDSKKPTVAAADLAAIAGQKPVITRARNSIAGFKLREGMPIGAKVTLRGVRMYEFLDRLINIALPRVRDFRGLNPKSFDGRGNFAMGIKEHIVFPEINYDKVDQMWGMDIIVCTTATNDDEARALLKEFNFPFRQ.

This sequence belongs to the universal ribosomal protein uL5 family. In terms of assembly, part of the 50S ribosomal subunit; part of the 5S rRNA/L5/L18/L25 subcomplex. Contacts the 5S rRNA and the P site tRNA. Forms a bridge to the 30S subunit in the 70S ribosome.

Functionally, this is one of the proteins that bind and probably mediate the attachment of the 5S RNA into the large ribosomal subunit, where it forms part of the central protuberance. In the 70S ribosome it contacts protein S13 of the 30S subunit (bridge B1b), connecting the 2 subunits; this bridge is implicated in subunit movement. Contacts the P site tRNA; the 5S rRNA and some of its associated proteins might help stabilize positioning of ribosome-bound tRNAs. The polypeptide is Large ribosomal subunit protein uL5 (Sinorhizobium medicae (strain WSM419) (Ensifer medicae)).